The sequence spans 649 residues: tRNA-guanine(15) transglycosylase (649 aa).

Aspartate 88 functions as the Nucleophile in the catalytic mechanism. The substrate site is built by aspartate 123 and alanine 194. 3 residues coordinate Zn(2+): cysteine 280, cysteine 282, and cysteine 285. The PUA domain occupies 573-648; sequence NYRIVIDSSV…VAATLRGGIK (76 aa).

The protein belongs to the archaeosine tRNA-ribosyltransferase family. Zn(2+) is required as a cofactor.

It carries out the reaction guanosine(15) in tRNA + 7-cyano-7-deazaguanine = 7-cyano-7-carbaguanosine(15) in tRNA + guanine. Its pathway is tRNA modification; archaeosine-tRNA biosynthesis. In terms of biological role, exchanges the guanine residue with 7-cyano-7-deazaguanine (preQ0) at position 15 in the dihydrouridine loop (D-loop) of archaeal tRNAs. This Methanococcus maripaludis (strain C5 / ATCC BAA-1333) protein is tRNA-guanine(15) transglycosylase.